The chain runs to 218 residues: Adenylate kinase (218 aa).

10–15 (GAGKGT) serves as a coordination point for ATP. The segment at 30–59 (STGDMIRETIKSGSALGQELKKVLDAGELV) is NMP. AMP-binding positions include Thr31, Arg36, 57–59 (ELV), and Gln92. An LID region spans residues 122-159 (GRRIHPASGRTYHTKFNPPKVADKDDVTGEPLITRTDD). Residues Arg123 and 132–133 (TY) contribute to the ATP site. The AMP site is built by Arg156 and Arg167. Residue Gln202 coordinates ATP.

This sequence belongs to the adenylate kinase family. As to quaternary structure, monomer.

Its subcellular location is the cytoplasm. The enzyme catalyses AMP + ATP = 2 ADP. It functions in the pathway purine metabolism; AMP biosynthesis via salvage pathway; AMP from ADP: step 1/1. Functionally, catalyzes the reversible transfer of the terminal phosphate group between ATP and AMP. Plays an important role in cellular energy homeostasis and in adenine nucleotide metabolism. This is Adenylate kinase from Francisella tularensis subsp. tularensis (strain FSC 198).